A 521-amino-acid chain; its full sequence is UDP-N-acetylmuramate--L-alanine ligase (521 aa).

136–142 (GAHGKTT) lines the ATP pocket.

This sequence belongs to the MurCDEF family.

The protein resides in the cytoplasm. The enzyme catalyses UDP-N-acetyl-alpha-D-muramate + L-alanine + ATP = UDP-N-acetyl-alpha-D-muramoyl-L-alanine + ADP + phosphate + H(+). It functions in the pathway cell wall biogenesis; peptidoglycan biosynthesis. In terms of biological role, cell wall formation. The chain is UDP-N-acetylmuramate--L-alanine ligase from Bifidobacterium adolescentis (strain ATCC 15703 / DSM 20083 / NCTC 11814 / E194a).